Consider the following 103-residue polypeptide: c-Myc-binding protein (103 aa).

Belongs to the AMY1 family. Binds via its C-terminal region to the N-terminal region of MYC. Associates with AKAP1/S-AKAP84. Interacts with MYCBPAP. Interacts with CFAP91.

The protein localises to the cytoplasm. The protein resides in the nucleus. In terms of biological role, may control the transcriptional activity of MYC. Stimulates the activation of E box-dependent transcription by MYC. This Mus musculus (Mouse) protein is c-Myc-binding protein (Mycbp).